The following is a 356-amino-acid chain: NADH dehydrogenase (ubiquinone) complex I, assembly factor 6 homolog (356 aa).

The N-terminal 41 residues, 1–41, are a transit peptide targeting the mitochondrion; that stretch reads MIRNSGRILFNSLKNSNVKLINRNVIINSNIRLFSTSTNNT.

It belongs to the NDUFAF6 family.

Its subcellular location is the mitochondrion inner membrane. In terms of biological role, involved in the assembly of mitochondrial NADH:ubiquinone oxidoreductase complex (complex I) at early stages. The polypeptide is NADH dehydrogenase (ubiquinone) complex I, assembly factor 6 homolog (Dictyostelium discoideum (Social amoeba)).